The following is an 86-amino-acid chain: MKTLLLTLVVVTIVCLDLGYTLTCLNCPEMFCGKFQTCRDGEKICFKKLQQRRPFSLRYIRGCAATCPGTKPRDMVECCSTDRCNR.

The N-terminal stretch at 1-21 is a signal peptide; sequence MKTLLLTLVVVTIVCLDLGYT. 5 cysteine pairs are disulfide-bonded: cysteine 24–cysteine 45, cysteine 27–cysteine 32, cysteine 38–cysteine 63, cysteine 67–cysteine 78, and cysteine 79–cysteine 84.

Belongs to the three-finger toxin family. Ancestral subfamily. Orphan group II sub-subfamily. As to expression, expressed by the venom gland.

It is found in the secreted. Binds with low affinity to muscular (alpha-1-beta-1-delta-epsilon/CHRNA1-CHRNB1-CHRND-CHRNE) and very low affinity to neuronal (alpha-7/CHRNA7) nicotinic acetylcholine receptor (nAChR). The polypeptide is Weak neurotoxin 6 (Naja sputatrix (Malayan spitting cobra)).